A 252-amino-acid chain; its full sequence is tRNA pseudouridine synthase A (252 aa).

D52 acts as the Nucleophile in catalysis. Y111 lines the substrate pocket.

It belongs to the tRNA pseudouridine synthase TruA family. In terms of assembly, homodimer.

It carries out the reaction uridine(38/39/40) in tRNA = pseudouridine(38/39/40) in tRNA. Functionally, formation of pseudouridine at positions 38, 39 and 40 in the anticodon stem and loop of transfer RNAs. The sequence is that of tRNA pseudouridine synthase A from Parabacteroides distasonis (strain ATCC 8503 / DSM 20701 / CIP 104284 / JCM 5825 / NCTC 11152).